The following is a 660-amino-acid chain: Macrolide export ATP-binding/permease protein MacB (660 aa).

The region spanning 10-248 is the ABC transporter domain; sequence LVLENIVRKF…AKGQALQGKQ (239 aa). 46–53 serves as a coordination point for ATP; sequence GASGSGKS. 4 helical membrane passes run 285-305, 532-552, 593-613, and 625-645; these read FLTM…VALG, ILTL…GIGV, IIGG…FVLF, and SIII…FSPA.

It belongs to the ABC transporter superfamily. Macrolide exporter (TC 3.A.1.122) family. As to quaternary structure, homodimer.

The protein localises to the cell inner membrane. In terms of biological role, non-canonical ABC transporter that contains transmembrane domains (TMD), which form a pore in the inner membrane, and an ATP-binding domain (NBD), which is responsible for energy generation. Confers resistance against macrolides. The sequence is that of Macrolide export ATP-binding/permease protein MacB from Bartonella quintana (strain Toulouse) (Rochalimaea quintana).